The primary structure comprises 649 residues: DNA mismatch repair protein MutL (649 aa).

This sequence belongs to the DNA mismatch repair MutL/HexB family.

This protein is involved in the repair of mismatches in DNA. It is required for dam-dependent methyl-directed DNA mismatch repair. May act as a 'molecular matchmaker', a protein that promotes the formation of a stable complex between two or more DNA-binding proteins in an ATP-dependent manner without itself being part of a final effector complex. This is DNA mismatch repair protein MutL from Streptococcus pneumoniae serotype 19F (strain G54).